The following is a 372-amino-acid chain: Putative glutamate--cysteine ligase 2 (372 aa).

Belongs to the glutamate--cysteine ligase type 2 family. YbdK subfamily. As to quaternary structure, homodimer.

The catalysed reaction is L-cysteine + L-glutamate + ATP = gamma-L-glutamyl-L-cysteine + ADP + phosphate + H(+). In terms of biological role, ATP-dependent carboxylate-amine ligase which exhibits weak glutamate--cysteine ligase activity. In Citrobacter koseri (strain ATCC BAA-895 / CDC 4225-83 / SGSC4696), this protein is Putative glutamate--cysteine ligase 2.